The following is a 547-amino-acid chain: Intercellular adhesion molecule 3 (547 aa).

The N-terminal stretch at 1–29 is a signal peptide; that stretch reads MATMVPSVLWPRACWTLLVCCLLTPGVQG. The Extracellular portion of the chain corresponds to 30-485; that stretch reads QEFLLRVEPQ…VMDIEAGSSH (456 aa). Positions 46 to 103 constitute an Ig-like C2-type 1 domain; the sequence is GGSLFVNCSTDCPSSEKIALETSLSKELVASGMGWAAFNLSNVTGNSRILCSVYCNGS. 6 N-linked (GlcNAc...) asparagine glycosylation sites follow: N52, N84, N87, N101, N110, and N134. Disulfide bonds link C53/C96 and C57/C100. The Ig-like C2-type 2 domain maps to 132 to 197; it reads GQNFTLRCQV…FSCRTELDMQ (66 aa). C139 and C190 form a disulfide bridge. Residues N206, N264, N295, N308, N320, N363, N389, N453, and N457 are each glycosylated (N-linked (GlcNAc...) asparagine). The 68-residue stretch at 234–301 folds into the Ig-like C2-type 3 domain; sequence ETSWPVDCTL…IVCNVTLGGE (68 aa). A disulfide bond links C241 and C294. The 54-residue stretch at 329-382 folds into the Ig-like C2-type 4 domain; the sequence is GSTVTVSCMAGARVQVTLDGVPAAAPGQPAQLQLNATESDDGRSFFCSATLEVD. An intrachain disulfide couples C336 to C375. Positions 416–469 constitute an Ig-like C2-type 5 domain; that stretch reads KTRHVLQCQARGNPYPELRCLKEGSSREVPVGIPFFVNVTHNGTYQCQASSSRG. A disulfide bond links C423 and C462. A helical transmembrane segment spans residues 486–510; the sequence is FVPVFVAVLLTLGVVTIVLALMYVF. Over 511 to 547 the chain is Cytoplasmic; that stretch reads REHQRSGSYHVREESTYLPLTSMQPTEAMGEEPSRAE.

The protein belongs to the immunoglobulin superfamily. ICAM family. In terms of assembly, interacts with moesin/MSN. Post-translationally, upon stimulation by a physiologic stimuli becomes rapidly and transiently phosphorylated on serine residues. In terms of processing, N-glycosylated; glycans consist of a mixture of tri- and tetra-antennary complex-type chains and high-mannose chains. In terms of tissue distribution, leukocytes.

It localises to the membrane. Functionally, ICAM proteins are ligands for the leukocyte adhesion protein LFA-1 (integrin alpha-L/beta-2). ICAM3 is also a ligand for integrin alpha-D/beta-2. In association with integrin alpha-L/beta-2, contributes to apoptotic neutrophil phagocytosis by macrophages. In Homo sapiens (Human), this protein is Intercellular adhesion molecule 3 (ICAM3).